We begin with the raw amino-acid sequence, 452 residues long: Tripartite motif-containing protein 51 (452 aa).

An RING-type zinc finger spans residues 15–56 (CPICMNYFLDPVTIDCGHSFCRPCLYLNWQDTAVLAQCSECK). The segment at 88 to 129 (SEEQICGMHRETKKMFCEVDKSLLCLPCSNSQEHRNHIHCPI) adopts a B box-type zinc-finger fold. Zn(2+) contacts are provided by Cys93, His96, Cys115, and His121. A B30.2/SPRY domain is found at 269–452 (ELSAGPITGL…LRPIFCCSHF (184 aa)).

It belongs to the TRIM/RBCC family.

In Homo sapiens (Human), this protein is Tripartite motif-containing protein 51 (TRIM51).